Reading from the N-terminus, the 103-residue chain is MSGRGKGGKGLGKGGAKRHRKILRDNIQGITKPAIRRLARRGGVKRISGLIYEETRGVLKVFLENVIRDAVTYTEHAKRKTVTAMDVVYALKRQGRTLYGFGG.

A compositionally biased stretch (gly residues) spans Met-1 to Gly-14. Positions Met-1–Arg-20 are disordered. The residue at position 2 (Ser-2) is an N-acetylserine. An N6-acetyl-N6-methyllysine; alternate mark is found at Lys-6 and Lys-13. Lys-17 carries the N6-acetyllysine modification. The DNA-binding element occupies Lys-17–Lys-21. Position 21 is an N6-methyllysine (Lys-21).

The protein belongs to the histone H4 family. As to quaternary structure, the nucleosome is a histone octamer containing two molecules each of H2A, H2B, H3 and H4 assembled in one H3-H4 heterotetramer and two H2A-H2B heterodimers. The octamer wraps approximately 147 bp of DNA.

It is found in the nucleus. It localises to the chromosome. Core component of nucleosome. Nucleosomes wrap and compact DNA into chromatin, limiting DNA accessibility to the cellular machineries which require DNA as a template. Histones thereby play a central role in transcription regulation, DNA repair, DNA replication and chromosomal stability. DNA accessibility is regulated via a complex set of post-translational modifications of histones, also called histone code, and nucleosome remodeling. The polypeptide is Histone H4 (H4DEKL) (Dendronephthya klunzingeri (Klunzinger's soft coral)).